The chain runs to 585 residues: PiggyBac transposable element-derived protein 4 (585 aa).

Residues 1-73 (MSNPRKRSIP…STSSDSGRSM (73 aa)) are disordered. A compositionally biased stretch (acidic residues) spans 25-40 (DSFDESDFSEIDDSDN). Basic and acidic residues predominate over residues 47-61 (EADKIRPLSHLESDG). Residues 62 to 72 (KSSTSSDSGRS) show a composition bias toward low complexity.

The polypeptide is PiggyBac transposable element-derived protein 4 (PGBD4) (Homo sapiens (Human)).